A 226-amino-acid polypeptide reads, in one-letter code: Chalcone--flavanone isomerase 1B-1 (226 aa).

The substrate site is built by T50, N115, and T192.

Belongs to the chalcone isomerase family.

It catalyses the reaction a chalcone = a flavanone.. It functions in the pathway secondary metabolite biosynthesis; flavonoid biosynthesis. In terms of biological role, catalyzes the intramolecular cyclization of bicyclic chalcones into tricyclic (S)-flavanones. Responsible for the isomerization of 4,2',4',6'-tetrahydroxychalcone (also termed chalcone) into naringenin. The chain is Chalcone--flavanone isomerase 1B-1 (CHI1B1) from Glycine max (Soybean).